We begin with the raw amino-acid sequence, 78 residues long: Excisionase (78 aa).

Its function is as follows. Excisionase and integrase are necessary for the excision of prophage from the host genome by site-specific recombination at the att site. The chain is Excisionase (xis) from Enterobacteria phage P21 (Bacteriophage 21).